The sequence spans 570 residues: Keratin, type I cytoskeletal 10 (570 aa).

The span at Met-1–Arg-16 shows a compositional bias: low complexity. Residues Met-1–Ser-29 form a disordered region. Positions Met-1–Asn-143 are head. 2 positions are modified to phosphoserine: Ser-15 and Ser-17. Position 32 is an asymmetric dimethylarginine; alternate (Arg-32). Arg-32 is subject to Omega-N-methylarginine; alternate. A phosphoserine mark is found at Ser-34, Ser-45, Ser-48, and Ser-168. The segment at Gly-144–Trp-179 is coil 1A. The IF rod domain maps to Gly-144 to Ser-458. The segment at Tyr-180–Thr-200 is linker 1. The tract at residues Ile-201–Leu-292 is coil 1B. The tract at residues Gln-293 to Leu-315 is linker 12. The interval Leu-316–Glu-454 is coil 2. The segment at Leu-451 to Tyr-570 is disordered. The tail stretch occupies residues Gly-455–Tyr-570. The segment covering Ser-456–Asp-562 has biased composition (gly residues).

It belongs to the intermediate filament family. (Microbial infection) Interacts (via C-terminal tail domain) with the S.aureus clumping factor, clfB; this interaction probably mediates S.aureus attachment to the highly keratinized squamous epithelial cells from the nasal cavity. In terms of assembly, heterotetramer of two type I and two type II keratins. Heterodimer with KRT1. Two heterodimers of KRT1 and KRT10 form a heterotetramer. The KRT10 subunit in the heterotetramer is probably disulfide-linked. Interacts with PLEC isoform 1C, when in a heterodimer with KRT1. As to quaternary structure, (Microbial infection) Interacts (via the C-terminal tail domain) with S.pneumoniae serine-rich repeat protein PsrP; this interaction probably mediates S.pneumoniae adherence to lung tissue and subsequent pathogenesis. As to expression, expressed in the suprabasal layers of the epidermis throughout the entire sole (at protein level). Expressed in the infundibular regions of the ear, the interscale regions of the tail, and the interfollicular epidermis of the back. Expressed in lung tissue from young mice (at protein level).

The protein localises to the secreted. The protein resides in the extracellular space. It is found in the cell surface. Its subcellular location is the cytoplasm. Its function is as follows. Plays a role in the establishment of the epidermal barrier on plantar skin. Involved in the maintenance of cell layer development and keratin filament bundles in suprabasal cells of the epithelium. (Microbial infection) Acts as a mediator of S.aureus adherence to desquamated nasal epithelial cells via clfB, and hence may play a role in nasal colonization. In terms of biological role, (Microbial infection) Binds S.pneumoniae PsrP, mediating adherence of the bacteria to lung cell lines. The polypeptide is Keratin, type I cytoskeletal 10 (Krt10) (Mus musculus (Mouse)).